The sequence spans 212 residues: ER lumen protein-retaining receptor 1 (212 aa).

Over 1–4 (MNLF) the chain is Lumenal. The chain crosses the membrane as a helical span at residues 5–24 (RFLGDLSHLLAIILLLLKIW). Over 25–32 (KSRSCAGI) the chain is Cytoplasmic. The chain crosses the membrane as a helical span at residues 33–52 (SGKSQVLFAVVFTARYLDLF). Residues 47-48 (RY) form an interaction with the K-D-E-L motif on target proteins region. Topologically, residues 53–58 (TNYISL) are lumenal. Residues 59–79 (YNTCMKVVYIACSFTTVWMIY) traverse the membrane as a helical segment. The Cytoplasmic portion of the chain corresponds to 80-92 (SKFKATYDGNHDT). A helical transmembrane segment spans residues 93-110 (FRVEFLVVPTAILAFLVN). At 111-116 (HDFTPL) the chain is on the lumenal side. A helical transmembrane segment spans residues 117 to 135 (EILWTFSIYLESVAILPQL). The Cytoplasmic segment spans residues 136-149 (FMVSKTGEAETITS). Residues 150–168 (HYLFALGVYRTLYLFNWIW) form a helical membrane-spanning segment. Residues 159-169 (RTLYLFNWIWR) are interaction with the K-D-E-L motif on target proteins. Over 169-178 (RYHFEGFFDL) the chain is Lumenal. Residues 179–199 (IAIVAGLVQTVLYCDFFYLYI) form a helical membrane-spanning segment. The Cytoplasmic portion of the chain corresponds to 200 to 212 (TKVLKGKKLSLPA). The tract at residues 204–207 (KGKK) is important for recycling of cargo proteins with the sequence motif K-D-E-L from the Golgi to the endoplasmic reticulum. At serine 209 the chain carries Phosphoserine; by PKA.

Belongs to the ERD2 family. Upon ligand binding the receptor oligomerizes and interacts with components of the transport machinery such as ARFGAP1 and ARF1. Post-translationally, phosphorylation by PKA at Ser-209 is required for endoplasmic reticulum retention function.

The protein resides in the golgi apparatus membrane. It localises to the cytoplasmic vesicle. Its subcellular location is the COPI-coated vesicle membrane. It is found in the endoplasmic reticulum membrane. The protein localises to the endoplasmic reticulum-Golgi intermediate compartment membrane. Receptor for the C-terminal sequence motif K-D-E-L that is present on endoplasmic reticulum resident proteins and that mediates their recycling from the Golgi back to the endoplasmic reticulum. The polypeptide is ER lumen protein-retaining receptor 1 (Kdelr1) (Mus musculus (Mouse)).